The chain runs to 436 residues: GTPase Der (436 aa).

2 EngA-type G domains span residues 4 to 167 (PTVA…PVEE) and 175 to 351 (IRFS…ESQN). GTP is bound by residues 10 to 17 (GRPNVGKS), 57 to 61 (DTGGI), 119 to 122 (NKVD), 181 to 188 (GRPNVGKS), 229 to 233 (DTAGM), and 294 to 297 (NKWD). The KH-like domain maps to 352 to 436 (KRIPSAVLND…PIHLIARKRK (85 aa)).

This sequence belongs to the TRAFAC class TrmE-Era-EngA-EngB-Septin-like GTPase superfamily. EngA (Der) GTPase family. In terms of assembly, associates with the 50S ribosomal subunit.

Its function is as follows. GTPase that plays an essential role in the late steps of ribosome biogenesis. The chain is GTPase Der from Streptococcus pyogenes serotype M2 (strain MGAS10270).